Here is a 2671-residue protein sequence, read N- to C-terminus: Inositol 1,4,5-trisphosphate-gated calcium channel ITPR3 (2671 aa).

The Cytoplasmic portion of the chain corresponds to 1-2202 (MSEMSSFLHI…LIYWFSRRMT (2202 aa)). 5 MIR domains span residues 113–173 (GDVV…LRSN), 174–224 (GDNV…INLF), 232–288 (EEVL…VEVV), 295–372 (GGAG…LDPT), and 378–434 (DSFV…IVSV). 1D-myo-inositol 1,4,5-trisphosphate contacts are provided by Arg266, Thr268, Leu269, and Arg270. Residues 322–342 (SYKGDASDPKAAGMGAQGRTG) form a disordered region. 1D-myo-inositol 1,4,5-trisphosphate contacts are provided by Arg503, Lys507, Arg510, Tyr567, Arg568, and Lys569. Arg743 is a Ca(2+) binding site. Phosphoserine is present on residues Ser916 and Ser934. 2 residues coordinate Ca(2+): Glu1122 and Glu1125. Disordered regions lie at residues 1132–1163 (GSGKGEEVEAGAAKDKKERPTDEEGFLHPPGE) and 1809–1848 (NDLGSQPHEDREPVDPTTKGRVASFSIPGSSSRYSLGPSL). Phosphoserine occurs at positions 1813, 1832, and 1834. The Ca(2+) site is built by Glu1882 and Glu1946. Ala1996, Glu2149, and Lys2152 together coordinate ATP. The chain crosses the membrane as a helical span at residues 2203–2223 (LWGSISFNLAVFINIIIAFFY). Residues 2224 to 2235 (PYMEGASTGVLD) lie on the Extracellular side of the membrane. The helical transmembrane segment at 2236–2256 (SPLISLLFWILICFSIAALFT) threads the bilayer. The Cytoplasmic portion of the chain corresponds to 2257 to 2264 (KRYSIRPL). The helical transmembrane segment at 2265 to 2285 (IVALILRSIYYLGIGPTLNIL) threads the bilayer. Over 2286 to 2325 (GALNLTNKIVFVVSFVGNRGTFIRGYKAMVMDMEFLYHVG) the chain is Extracellular. A helical membrane pass occupies residues 2326-2346 (YILTSVLGLFAHELFYSILLF). Residues 2347–2368 (DLIYREETLFNVIKSVTRNGRS) lie on the Cytoplasmic side of the membrane. The helical transmembrane segment at 2369-2389 (ILLTALLALILVYLFSIVGFL) threads the bilayer. The Extracellular portion of the chain corresponds to 2390-2496 (FLKDDFILEV…ESLFPARVVY (107 aa)). The cysteines at positions 2455 and 2461 are disulfide-linked. The chain crosses the membrane as a helical span at residues 2497 to 2517 (DLLFFFIVIIIVLNLIFGVII). The Cytoplasmic segment spans residues 2518–2671 (DTFADLRSEK…FVDVQNCISR (154 aa)). The ATP site is built by Cys2538 and Phe2539. Cys2538 is a Zn(2+) binding site. Zn(2+) is bound by residues Cys2541 and His2558. ATP-binding residues include Lys2560, His2563, Asn2564, and Met2565. His2563 provides a ligand contact to Zn(2+). Thr2581 is a binding site for Ca(2+). A phosphoserine mark is found at Ser2609 and Ser2670.

It belongs to the InsP3 receptor family. Homotetramer. Homodimer. Interacts with TRPC1, TRPC3 and TRPC4. Interacts with TRPV4. Interacts with SIGMAR1. Interacts with PML and AKT1. Interacts with IRAG2 (via coiled-coil domain). Interacts with CABP1. Interacts with TMBIM4/LFG4. Interacts with CEMIP. Interacts with TESPA1. Interacts with TMEM203. Interacts with BOK; regulates ITPR3 expression. Interacts with BCL2L10. Interacts with CHGA and CHGB. Phosphorylated by AKT1 on serine and/or threonine residues. Expressed in intestinal crypt and villus epithelial cells.

The protein resides in the endoplasmic reticulum membrane. The protein localises to the cytoplasmic vesicle. Its subcellular location is the secretory vesicle membrane. It catalyses the reaction Ca(2+)(in) = Ca(2+)(out). With respect to regulation, inositol 1,4,5-trisphosphate-gated calcium channel is regulated by cytosolic calcium in a biphasic manner. At low concentrations, cytosolic calcium binds at a high-affinity juxtamembrane domain (JD) calcium binding site, allowing ITPR3 to activate by escaping a low-energy resting state through an ensemble of preactivated states. At high cytosolic calcium concentrations, ITPR3 preferentially enters an inhibited state stabilized by calcium binding at a second, low-affinity cytoplasmic domain (CD) calcium binding site. Inositol 1,4,5-trisphosphate-gated calcium channel that, upon 1D-myo-inositol 1,4,5-trisphosphate binding, transports calcium from the endoplasmic reticulum lumen to cytoplasm, thus releasing the intracellular calcium and therefore participates in cellular calcium ion homeostasis. 1D-myo-inositol 1,4,5-trisphosphate binds to the ligand-free channel without altering its global conformation, yielding the low-energy resting state, then progresses through resting-to preactivated transitions to the higher energy preactivated state, which increases affinity for calcium, promoting binding of the low basal cytosolic calcium at the juxtamembrane domain (JD) site, favoring the transition through the ensemble of high-energy intermediate states along the trajectory to the fully-open activated state. Upon opening, releases calcium in the cytosol where it can bind to the low-affinity cytoplasmic domain (CD) site and stabilizes the inhibited state to terminate calcium release. The protein is Inositol 1,4,5-trisphosphate-gated calcium channel ITPR3 of Homo sapiens (Human).